The following is a 1868-amino-acid chain: Protein TIC 214 (1868 aa).

6 helical membrane passes run 11 to 31, 64 to 84, 87 to 107, 126 to 146, 166 to 186, and 221 to 241; these read LLLL…YYGF, FIMG…HLAL, PHTL…FFWN, LSIQ…HFIL, ILFV…LMKS, and IFSI…PSPI. Positions 248–276 are enriched in basic and acidic residues; that stretch reads ESSKGEEKKKTEKERDVEMETISKTKKIE. Disordered stretches follow at residues 248–277, 617–643, 658–700, 782–806, and 1537–1607; these read ESSK…KIEQ, FDFE…GIRS, DEDT…QAEE, TSDY…KRKE, and YIDP…RKKK. Residues 617–636 show a composition bias toward acidic residues; that stretch reads FDFEEEEEEEEEEDDEEEPT. Residues 674 to 683 show a composition bias toward polar residues; the sequence is AKNSDQAKNS. Composition is skewed to basic and acidic residues over residues 684–700, 789–806, and 1537–1576; these read DQAK…QAEE, GAKE…KRKE, and YIDP…ERQH.

This sequence belongs to the TIC214 family. As to quaternary structure, part of the Tic complex.

It is found in the plastid. The protein localises to the chloroplast inner membrane. Its function is as follows. Involved in protein precursor import into chloroplasts. May be part of an intermediate translocation complex acting as a protein-conducting channel at the inner envelope. The polypeptide is Protein TIC 214 (Nuphar advena (Common spatterdock)).